The sequence spans 284 residues: Four and a half LIM domains protein 5 (284 aa).

The C4-type zinc finger occupies 8-32 (CQYCTASLLGKKYVLKDDSPYCVTC). LIM zinc-binding domains are found at residues 39-100 (NYCE…ECSS), 101-160 (KCFH…KEFA), 161-220 (HYCN…LYAN), and 223-283 (VACS…MDTD).

As to quaternary structure, interacts with CREM (via the third LIM domain). Interacts (via second LIM domain) with SPAG8. Testis-specific (at protein level).

The protein localises to the nucleus. Its function is as follows. May be involved in the regulation of spermatogenesis. Stimulates CREM transcriptional activity in a phosphorylation-independent manner. The protein is Four and a half LIM domains protein 5 (FHL5) of Homo sapiens (Human).